The chain runs to 313 residues: Aspartate carbamoyltransferase catalytic subunit (313 aa).

Carbamoyl phosphate-binding residues include arginine 58 and threonine 59. L-aspartate is bound at residue lysine 86. Residues arginine 108, histidine 136, and glutamine 139 each coordinate carbamoyl phosphate. 2 residues coordinate L-aspartate: arginine 169 and arginine 223. Residues glycine 264 and proline 265 each coordinate carbamoyl phosphate.

Belongs to the aspartate/ornithine carbamoyltransferase superfamily. ATCase family. As to quaternary structure, heterododecamer (2C3:3R2) of six catalytic PyrB chains organized as two trimers (C3), and six regulatory PyrI chains organized as three dimers (R2).

It carries out the reaction carbamoyl phosphate + L-aspartate = N-carbamoyl-L-aspartate + phosphate + H(+). The protein operates within pyrimidine metabolism; UMP biosynthesis via de novo pathway; (S)-dihydroorotate from bicarbonate: step 2/3. Functionally, catalyzes the condensation of carbamoyl phosphate and aspartate to form carbamoyl aspartate and inorganic phosphate, the committed step in the de novo pyrimidine nucleotide biosynthesis pathway. In Ruminiclostridium cellulolyticum (strain ATCC 35319 / DSM 5812 / JCM 6584 / H10) (Clostridium cellulolyticum), this protein is Aspartate carbamoyltransferase catalytic subunit.